We begin with the raw amino-acid sequence, 73 residues long: U-scoloptoxin(22)-Cw1a (73 aa).

An N-terminal signal peptide occupies residues Met1 to Ala24.

This sequence belongs to the scoloptoxin-22 family. Post-translationally, contains 1 disulfide bond. In terms of tissue distribution, expressed by the venom gland.

It localises to the secreted. This is U-scoloptoxin(22)-Cw1a from Cormocephalus westwoodi (Westwood's green centipede).